Reading from the N-terminus, the 469-residue chain is Argininosuccinate lyase (469 aa).

Belongs to the lyase 1 family. Argininosuccinate lyase subfamily.

It localises to the cytoplasm. It carries out the reaction 2-(N(omega)-L-arginino)succinate = fumarate + L-arginine. It participates in amino-acid biosynthesis; L-arginine biosynthesis; L-arginine from L-ornithine and carbamoyl phosphate: step 3/3. This Burkholderia mallei (strain NCTC 10247) protein is Argininosuccinate lyase.